A 139-amino-acid chain; its full sequence is Large ribosomal subunit protein uL16c (139 aa).

Residues 1–17 show a composition bias toward basic residues; the sequence is MLSPKKTKFRKQHRGRM. The disordered stretch occupies residues 1-23; the sequence is MLSPKKTKFRKQHRGRMKGSASK.

It belongs to the universal ribosomal protein uL16 family. In terms of assembly, part of the 50S ribosomal subunit.

The protein resides in the plastid. It is found in the chloroplast. The polypeptide is Large ribosomal subunit protein uL16c (Porphyra purpurea (Red seaweed)).